The primary structure comprises 275 residues: Exosome complex component RRP40 (275 aa).

N-acetylalanine is present on A2. K151 participates in a covalent cross-link: Glycyl lysine isopeptide (Lys-Gly) (interchain with G-Cter in SUMO2).

The protein belongs to the RRP40 family. Component of the RNA exosome core complex (Exo-9), composed of EXOSC1, EXOSC2, EXOSC3, EXOSC4, EXOSC5, EXOSC6, EXOSC7, EXOSC8 and EXOSC9; within the complex interacts with EXOSC5 and EXOSC9. The catalytically inactive RNA exosome core complex (Exo-9) associates with the catalytic subunit EXOSC10/RRP6. Exo-9 may associate with DIS3 to form the nucleolar exosome complex, or DIS3L to form the cytoplasmic exosome complex. Exo-9 is formed by a hexameric base ring consisting of the heterodimers EXOSC4-EXOSC9, EXOSC5-EXOSC8 and EXOSC6-EXOSC7, and a cap ring consisting of EXOSC1, EXOSC2 and EXOSC3. The RNA exosome complex associates with cofactors C1D/RRP47, MPHOSPH6/MPP6 and MTREX/MTR4. Interacts with MPHOSPH6/MPP6; the interaction is direct. Interacts with GTPBP1. Interacts with ZC3HAV1. Interacts with DDX17 only in the presence of ZC3HAV1 in an RNA-independent manner. Interacts with DHX36; this interaction occurs in a RNase-insensitive manner. Interacts with HBS1L isoform 2.

The protein resides in the cytoplasm. It is found in the nucleus. The protein localises to the nucleolus. Non-catalytic component of the RNA exosome complex which has 3'-&gt;5' exoribonuclease activity and participates in a multitude of cellular RNA processing and degradation events. In the nucleus, the RNA exosome complex is involved in proper maturation of stable RNA species such as rRNA, snRNA and snoRNA, in the elimination of RNA processing by-products and non-coding 'pervasive' transcripts, such as antisense RNA species and promoter-upstream transcripts (PROMPTs), and of mRNAs with processing defects, thereby limiting or excluding their export to the cytoplasm. The RNA exosome may be involved in Ig class switch recombination (CSR) and/or Ig variable region somatic hypermutation (SHM) by targeting AICDA deamination activity to transcribed dsDNA substrates. In the cytoplasm, the RNA exosome complex is involved in general mRNA turnover and specifically degrades inherently unstable mRNAs containing AU-rich elements (AREs) within their 3' untranslated regions, and in RNA surveillance pathways, preventing translation of aberrant mRNAs. It seems to be involved in degradation of histone mRNA. The catalytic inactive RNA exosome core complex of 9 subunits (Exo-9) is proposed to play a pivotal role in the binding and presentation of RNA for ribonucleolysis, and to serve as a scaffold for the association with catalytic subunits and accessory proteins or complexes. EXOSC3 as peripheral part of the Exo-9 complex stabilizes the hexameric ring of RNase PH-domain subunits through contacts with EXOSC9 and EXOSC5. This chain is Exosome complex component RRP40 (EXOSC3), found in Homo sapiens (Human).